Reading from the N-terminus, the 111-residue chain is Cystatin (111 aa).

The Cystatin domain maps to 3-103 (GGLSPRDVTD…CRFEVWSRPW (101 aa)). A Secondary area of contact motif is present at residues 47–51 (QVVSG). An intrachain disulfide couples Cys65 to Cys81.

It belongs to the cystatin family. In terms of tissue distribution, expressed by the venom gland.

It is found in the secreted. Its function is as follows. Inhibits various C1 cysteine proteases including cathepsin L, papain and cathepsin B. This protein has no toxic activity and its function in the venom is unknown. It may play a role as housekeeping or regulatory protein. The sequence is that of Cystatin from Bitis arietans (African puff adder).